The primary structure comprises 111 residues: Large ribosomal subunit protein uL23 (111 aa).

This sequence belongs to the universal ribosomal protein uL23 family. Part of the 50S ribosomal subunit. Contacts protein L29, and trigger factor when it is bound to the ribosome.

Its function is as follows. One of the early assembly proteins it binds 23S rRNA. One of the proteins that surrounds the polypeptide exit tunnel on the outside of the ribosome. Forms the main docking site for trigger factor binding to the ribosome. The sequence is that of Large ribosomal subunit protein uL23 from Nitrosomonas europaea (strain ATCC 19718 / CIP 103999 / KCTC 2705 / NBRC 14298).